The sequence spans 64 residues: Large ribosomal subunit protein bL28 (64 aa).

The protein belongs to the bacterial ribosomal protein bL28 family.

In Persephonella marina (strain DSM 14350 / EX-H1), this protein is Large ribosomal subunit protein bL28.